A 408-amino-acid chain; its full sequence is 3-ketoacyl-CoA thiolase A, peroxisomal (408 aa).

Residue C112 is the Acyl-thioester intermediate of the active site. Active-site proton acceptor residues include H366 and C394.

It belongs to the thiolase-like superfamily. Thiolase family. Homodimer.

The protein localises to the peroxisome. It carries out the reaction an acyl-CoA + acetyl-CoA = a 3-oxoacyl-CoA + CoA. It participates in lipid metabolism; fatty acid metabolism. This Candida tropicalis (Yeast) protein is 3-ketoacyl-CoA thiolase A, peroxisomal.